The chain runs to 347 residues: NADH-ubiquinone oxidoreductase chain 2 (347 aa).

Helical transmembrane passes span proline 3–serine 23, histidine 25–methionine 45, tyrosine 59–methionine 79, threonine 96–proline 116, valine 122–leucine 142, isoleucine 149–glycine 169, isoleucine 178–proline 198, methionine 200–methionine 220, serine 242–proline 262, glutamate 274–methionine 294, and methionine 323–leucine 343.

This sequence belongs to the complex I subunit 2 family. As to quaternary structure, core subunit of respiratory chain NADH dehydrogenase (Complex I) which is composed of 45 different subunits. Interacts with TMEM242.

Its subcellular location is the mitochondrion inner membrane. The catalysed reaction is a ubiquinone + NADH + 5 H(+)(in) = a ubiquinol + NAD(+) + 4 H(+)(out). In terms of biological role, core subunit of the mitochondrial membrane respiratory chain NADH dehydrogenase (Complex I) that is believed to belong to the minimal assembly required for catalysis. Complex I functions in the transfer of electrons from NADH to the respiratory chain. The immediate electron acceptor for the enzyme is believed to be ubiquinone. The protein is NADH-ubiquinone oxidoreductase chain 2 of Suricata suricatta (Meerkat).